The following is a 330-amino-acid chain: Ribosome production factor 1 (330 aa).

Disordered stretches follow at residues M1–T32 and E53–P83. Positions K55–R70 are enriched in basic residues. The span at K71–P83 shows a compositional bias: basic and acidic residues. Residues P123–D306 form the Brix domain. Positions V284–Q301 are RNA-binding.

The protein resides in the nucleus. It localises to the nucleolus. In terms of biological role, may be required for ribosome biogenesis. The sequence is that of Ribosome production factor 1 (rpf1) from Danio rerio (Zebrafish).